The primary structure comprises 442 residues: PCI domain-containing protein C1105.07c (442 aa).

The PCI domain occupies 224–415 (VTFRYYLGRC…STLVLKKDPS (192 aa)).

The protein resides in the cytoplasm. The protein localises to the nucleus envelope. The polypeptide is PCI domain-containing protein C1105.07c (Schizosaccharomyces pombe (strain 972 / ATCC 24843) (Fission yeast)).